Here is a 397-residue protein sequence, read N- to C-terminus: Tryptophan synthase beta chain (397 aa).

At K87 the chain carries N6-(pyridoxal phosphate)lysine.

Belongs to the TrpB family. Tetramer of two alpha and two beta chains. Pyridoxal 5'-phosphate is required as a cofactor.

It catalyses the reaction (1S,2R)-1-C-(indol-3-yl)glycerol 3-phosphate + L-serine = D-glyceraldehyde 3-phosphate + L-tryptophan + H2O. It participates in amino-acid biosynthesis; L-tryptophan biosynthesis; L-tryptophan from chorismate: step 5/5. Its function is as follows. The beta subunit is responsible for the synthesis of L-tryptophan from indole and L-serine. The sequence is that of Tryptophan synthase beta chain from Escherichia coli O45:K1 (strain S88 / ExPEC).